Reading from the N-terminus, the 418-residue chain is MKDQIIQKLHDVVRASRELVTLSDEAINRLLLDLADQIPNHQTAILEANQRDIERMDSANPMVDRLLLNEARLQAIAADIRNVASLPTPLDAVLEKRTLPNGLELKKVSVPMGVIGIIYEARPNVTFDVFALCLKSGNATVLKGGSDAMYSNIAIVELIHSVLQQHGINPDTLYLLPAEREAAAVMLGAVGYIDMIIPRGSQKLIDFVRDNSRVPVIETGAGIVHTYFDVSGDLELGKQVIFNAKTRRPSVCNALDTLVIHRDRLGDLSYLVEPLQSRQVELFVDDAAYQELHGFYPKALLHQAKPEHFGTEFLSLKMSVKTVANLDEALEHIATYSSRHSEAIIATDAATVATFMKRVDAAVVYANTSTAFTDGAQFGLGAEIGISTQKLHARGPMALREMTTYKWLIVGNGQVRPA.

This sequence belongs to the gamma-glutamyl phosphate reductase family.

Its subcellular location is the cytoplasm. The catalysed reaction is L-glutamate 5-semialdehyde + phosphate + NADP(+) = L-glutamyl 5-phosphate + NADPH + H(+). The protein operates within amino-acid biosynthesis; L-proline biosynthesis; L-glutamate 5-semialdehyde from L-glutamate: step 2/2. In terms of biological role, catalyzes the NADPH-dependent reduction of L-glutamate 5-phosphate into L-glutamate 5-semialdehyde and phosphate. The product spontaneously undergoes cyclization to form 1-pyrroline-5-carboxylate. The sequence is that of Gamma-glutamyl phosphate reductase from Chlorobium chlorochromatii (strain CaD3).